The primary structure comprises 219 residues: Dephospho-CoA kinase (219 aa).

The DPCK domain occupies 8–215; sequence LVGVTGGIGS…EAAASGPDCQ (208 aa). 16–21 serves as a coordination point for ATP; that stretch reads GSGKST.

This sequence belongs to the CoaE family.

Its subcellular location is the cytoplasm. The catalysed reaction is 3'-dephospho-CoA + ATP = ADP + CoA + H(+). It functions in the pathway cofactor biosynthesis; coenzyme A biosynthesis; CoA from (R)-pantothenate: step 5/5. Functionally, catalyzes the phosphorylation of the 3'-hydroxyl group of dephosphocoenzyme A to form coenzyme A. The chain is Dephospho-CoA kinase from Chlorobium luteolum (strain DSM 273 / BCRC 81028 / 2530) (Pelodictyon luteolum).